A 460-amino-acid polypeptide reads, in one-letter code: Phosphoglucosamine mutase (460 aa).

The active-site Phosphoserine intermediate is the serine 102. The Mg(2+) site is built by serine 102, aspartate 241, aspartate 243, and aspartate 245. Serine 102 bears the Phosphoserine mark.

It belongs to the phosphohexose mutase family. Requires Mg(2+) as cofactor. Activated by phosphorylation.

It carries out the reaction alpha-D-glucosamine 1-phosphate = D-glucosamine 6-phosphate. Functionally, catalyzes the conversion of glucosamine-6-phosphate to glucosamine-1-phosphate. The polypeptide is Phosphoglucosamine mutase (Verminephrobacter eiseniae (strain EF01-2)).